The following is a 562-amino-acid chain: Arginine--tRNA ligase (562 aa).

Positions 121-131 (PNIAKPFSVGH) match the 'HIGH' region motif.

Belongs to the class-I aminoacyl-tRNA synthetase family. As to quaternary structure, monomer.

It is found in the cytoplasm. The catalysed reaction is tRNA(Arg) + L-arginine + ATP = L-arginyl-tRNA(Arg) + AMP + diphosphate. The chain is Arginine--tRNA ligase from Streptococcus suis (strain 98HAH33).